The following is a 250-amino-acid chain: Large ribosomal subunit protein uL30 (250 aa).

It belongs to the universal ribosomal protein uL30 family.

The sequence is that of Large ribosomal subunit protein uL30 (RPL7) from Yarrowia lipolytica (strain CLIB 122 / E 150) (Yeast).